Reading from the N-terminus, the 163-residue chain is Large ribosomal subunit protein bL19 (163 aa).

A compositionally biased stretch (basic and acidic residues) spans 131–150 (ISQERKASGKDQASKPEVRP). The tract at residues 131-163 (ISQERKASGKDQASKPEVRPQGKKPAPKPKAKK) is disordered. Over residues 151-163 (QGKKPAPKPKAKK) the composition is skewed to basic residues.

It belongs to the bacterial ribosomal protein bL19 family.

In terms of biological role, this protein is located at the 30S-50S ribosomal subunit interface and may play a role in the structure and function of the aminoacyl-tRNA binding site. The protein is Large ribosomal subunit protein bL19 of Rhodospirillum rubrum (strain ATCC 11170 / ATH 1.1.1 / DSM 467 / LMG 4362 / NCIMB 8255 / S1).